A 232-amino-acid polypeptide reads, in one-letter code: Ubiquinone biosynthesis O-methyltransferase (232 aa).

Residues Arg-36, Gly-55, Asp-76, and Leu-120 each contribute to the S-adenosyl-L-methionine site.

Belongs to the methyltransferase superfamily. UbiG/COQ3 family.

It carries out the reaction a 3-demethylubiquinol + S-adenosyl-L-methionine = a ubiquinol + S-adenosyl-L-homocysteine + H(+). It catalyses the reaction a 3-(all-trans-polyprenyl)benzene-1,2-diol + S-adenosyl-L-methionine = a 2-methoxy-6-(all-trans-polyprenyl)phenol + S-adenosyl-L-homocysteine + H(+). Its pathway is cofactor biosynthesis; ubiquinone biosynthesis. O-methyltransferase that catalyzes the 2 O-methylation steps in the ubiquinone biosynthetic pathway. The sequence is that of Ubiquinone biosynthesis O-methyltransferase from Pseudomonas fluorescens (strain Pf0-1).